The primary structure comprises 341 residues: 2-acylglycerol O-acyltransferase 3 (341 aa).

The next 2 helical transmembrane spans lie at 29–49 and 50–70; these read YVLT…VLLF and TSLW…WDTP. Asn126 carries N-linked (GlcNAc...) asparagine glycosylation. Residues 137 to 157 traverse the membrane as a helical segment; sequence LFPGLRPWLAVLAGLFYLPVY.

This sequence belongs to the diacylglycerol acyltransferase family. Post-translationally, ubiquitinated. Ubiquitination leads to proteasomal degradation. As to expression, selectively expressed in the digestive system. Highly expressed in the ileum, and at lower level in jejunum, duodenum, colon, cecum and the rectum. Not expressed in the stomach and the esophagus and trachea. Expressed at very low level in liver.

It is found in the endoplasmic reticulum membrane. The protein resides in the cytoplasm. The protein localises to the perinuclear region. It catalyses the reaction a 2-acylglycerol + an acyl-CoA = a 1,2-diacylglycerol + CoA. The enzyme catalyses an acyl-CoA + a 1,2-diacyl-sn-glycerol = a triacyl-sn-glycerol + CoA. The catalysed reaction is 2-(9Z-octadecenoyl)-glycerol + (9Z)-octadecenoyl-CoA = 1,2-di-(9Z-octadecenoyl)-sn-glycerol + CoA. It carries out the reaction 2-(9Z-octadecenoyl)-glycerol + hexadecanoyl-CoA = 1-hexadecanoyl-2-(9Z-octadecenoyl)-sn-glycerol + CoA. It catalyses the reaction 1,2-di-(9Z-octadecenoyl)-sn-glycerol + (9Z)-octadecenoyl-CoA = 1,2,3-tri-(9Z-octadecenoyl)-glycerol + CoA. The enzyme catalyses 1-hexadecanoyl-2-(9Z-octadecenoyl)-sn-glycerol + hexadecanoyl-CoA = 1,3-dihexadecanoyl-2-(9Z-octadecenoyl)glycerol + CoA. The catalysed reaction is all-trans-retinol + hexadecanoyl-CoA = all-trans-retinyl hexadecanoate + CoA. It carries out the reaction 1-O-(9Z-octadecenyl)-glycerol + (9Z)-octadecenoyl-CoA = 1-O-(9Z-octadecyl)-3-(9Z-octadecenoyl)-glycerol + CoA. It catalyses the reaction 1-O-(9Z-octadecyl)-3-(9Z-octadecenoyl)-glycerol + (9Z)-octadecenoyl-CoA = 1-O-(9Z-octadecenyl)-2,3-di-(9Z-octadecenoyl)glycerol + CoA. Its pathway is glycerolipid metabolism; triacylglycerol biosynthesis. Catalyzes the formation of diacylglycerol from 2-monoacylglycerol and fatty acyl-CoA. Also able to catalyze the terminal step in triacylglycerol synthesis by using diacylglycerol and fatty acyl-CoA as substrates. Has a preference toward palmitoyl-CoA and oleoyl-CoA. May be involved in absorption of dietary fat in the small intestine by catalyzing the resynthesis of triacylglycerol in enterocytes. Also able to use 1-monoalkylglycerol (1-MAkG) as an acyl acceptor for the synthesis of monoalkyl-monoacylglycerol (MAMAG). This is 2-acylglycerol O-acyltransferase 3 from Homo sapiens (Human).